A 905-amino-acid polypeptide reads, in one-letter code: Tight junction protein ZO-3 (905 aa).

Residues 11-93 (TATLYKDPRR…TANVTVKRPR (83 aa)) enclose the PDZ 1 domain. Residues 92 to 167 (PRRVQLPATK…GGGSEANGLD (76 aa)) are disordered. Phosphoserine occurs at positions 111 and 128. The span at 124-133 (GDSSSGSGRS) shows a compositional bias: low complexity. Basic residues predominate over residues 139–155 (RRSRAGRRGRVGSHGRR). Ser-156, Ser-157, Ser-161, Ser-195, and Ser-311 each carry phosphoserine. One can recognise a PDZ 2 domain in the interval 187 to 264 (SVLVKRRNSE…ELTLLVLRDS (78 aa)). The interval 289–367 (LTSELSQAPP…QSLEDRGYSP (79 aa)) is disordered. Thr-317 is subject to Phosphothreonine. Ser-319, Ser-343, and Ser-359 each carry phosphoserine. Residues 368–434 (DTRVVSFPKG…LTREEAVQFL (67 aa)) form the PDZ 3 domain. Residues 464 to 541 (GDSFYIRTHF…PNQSRAEQLA (78 aa)) enclose the SH3 domain. A Guanylate kinase-like domain is found at 573–754 (RRGTKKASTQ…WYQEVKAVIQ (182 aa)). Ser-584 is modified (phosphoserine). Disordered regions lie at residues 773-818 (EDLD…PQDV) and 850-905 (TDKW…ATDL). Residues 851-877 (DKWETQADSHYTQDQRRQDSMRTYKHE) are compositionally biased toward basic and acidic residues. Phosphoserine is present on residues Ser-891 and Ser-892.

This sequence belongs to the MAGUK family. In terms of assembly, interacts with occludin OCLN, claudins and TPJ1. Interacts with PATJ. Interacts with UBN1. Interacts with FASLG. Interacts with CCND1. Phosphorylated. In terms of tissue distribution, is concentrated in various types of epithelium, in tissues such as the lung, liver and kidney, but not in endothelium or at cadherin-based cell-cell adhesion sites.

The protein resides in the cell membrane. Its subcellular location is the cell junction. It is found in the tight junction. It localises to the nucleus. In terms of biological role, tjp1, Tjp2, and Tjp3 are closely related scaffolding proteins that link tight junction (TJ) transmembrane proteins such as claudins, junctional adhesion molecules, and occludin to the actin cytoskeleton. The tight junction acts to limit movement of substances through the paracellular space and as a boundary between the compositionally distinct apical and basolateral plasma membrane domains of epithelial and endothelial cells. Binds and recruits PatJ to tight junctions where it connects and stabilizes apical and lateral components of tight junctions. Promotes cell-cycle progression through the sequestration of cyclin D1 (Ccnd1) at tight junctions during mitosis which prevents Ccnd1 degradation during M-phase and enables S-phase transition. With Tjp1 and Tjp2, participates in the junctional retention and stability of the transcription factor DbpA, but is not involved in its shuttling to the nucleus. Contrary to Tjp2, Tjp3 is dispensable for individual viability, embryonic development, epithelial differentiation, and the establishment of TJs, at least in the laboratory environment. This is Tight junction protein ZO-3 (Tjp3) from Mus musculus (Mouse).